The primary structure comprises 449 residues: Trigger factor (449 aa).

A PPIase FKBP-type domain is found at 172–257; the sequence is GDEVRFDFKG…IKEITNVKPQ (86 aa).

Belongs to the FKBP-type PPIase family. Tig subfamily.

The protein resides in the cytoplasm. It carries out the reaction [protein]-peptidylproline (omega=180) = [protein]-peptidylproline (omega=0). Its function is as follows. Involved in protein export. Acts as a chaperone by maintaining the newly synthesized protein in an open conformation. Functions as a peptidyl-prolyl cis-trans isomerase. The polypeptide is Trigger factor (Ureaplasma parvum serovar 3 (strain ATCC 27815 / 27 / NCTC 11736)).